The primary structure comprises 649 residues: MGLSTYVGTFLLCILTLSHCKSGKEEYGTVIGIDLGTTYSCVGVFKNGRVEIIANDQGNRITPSYVAFSGDGERLIGDAAKNQLTSNPKNTLFDAKRLIGRDYDDKDVQGDIKRYPFKVINKNNKPYMKVQVGSEEKGFAPEEVSAMVLSKMKEIAEAYLGTEVTHAVVTVPAYFNDAQRQATKDAGAIAGLTVLRIINEPTAAAIAYGLDKKDTEKNILVFDLGGGTFDVSLLTIDNGVFEVVATSGDTHLGGEDFDQRLIDYFVKLYKKKEGKDITKDDRAVQKLRREVEKAKRTLSTEHSTMIEIDNLFEGKDFSEPLTRARFEELNNDLFRSTLKPVMKVMEDSGLKKEDIDDIVLVGGSTRIPKIQQLVKEFFNVKEPSRGINPDEAVAYGAAVQAGVISGVEDTGDIVLLDVCPLTMGIETVGGVMTKLIPRNTVIPTKKSQIFSTAADNQPTVTIQVFEGERPMTKDNHFLGKFDLTGIPPAPRGLPQIEVTFEIDVNGILRVSAEDKGTGKKSNIVINKETNRLTPEEIERMIQDAEKFSDQDKQVKERVEVRNDLESLAYSIKNQVKDKEKMGGKLSDDEIKTIEDAADEAIKWMENNPQAETSDYKKQKANLESVVQPIVSKLYEGAAPPTESTPKEEL.

The signal sequence occupies residues 1–20 (MGLSTYVGTFLLCILTLSHC). Residues 36-39 (GTTY), Lys96, 226-228 (GGT), 292-299 (EKAKRTLS), and 363-366 (GSTR) each bind ATP. A nucleotide-binding (NBD) region spans residues 125–279 (KPYMKVQVGS…KKKEGKDITK (155 aa)). The tract at residues 399-499 (VQAGVISGVE…PRGLPQIEVT (101 aa)) is substrate-binding (SBD). The short motif at 646–649 (KEEL) is the Prevents secretion from ER element.

This sequence belongs to the heat shock protein 70 family.

The protein localises to the endoplasmic reticulum lumen. It catalyses the reaction ATP + H2O = ADP + phosphate + H(+). The chaperone activity is regulated by ATP-induced allosteric coupling of the nucleotide-binding (NBD) and substrate-binding (SBD) domains. In the ADP-bound and nucleotide-free (apo) states, the two domains have little interaction. In contrast, in the ATP-bound state the two domains are tightly coupled, which results in drastically accelerated kinetics in both binding and release of polypeptide substrates. J domain-containing co-chaperones stimulate the ATPase activity and are required for efficient substrate recognition. Endoplasmic reticulum chaperone that plays a key role in protein folding and quality control in the endoplasmic reticulum lumen. Involved in the correct folding of proteins and degradation of misfolded proteins. Acts as a key repressor of the unfolded protein response (UPR). This chain is Endoplasmic reticulum chaperone BiP, found in Echinococcus multilocularis (Fox tapeworm).